A 476-amino-acid chain; its full sequence is UPF0481 protein At3g47200 (476 aa).

The tract at residues 1-24 is disordered; it reads MADKTDIISSSSDKASPPPPSAFR. 2 consecutive transmembrane segments (helical) span residues 133-153 and 439-459; these read LMFM…IMSG and AVLF…LSYL.

It belongs to the UPF0481 family.

The protein resides in the membrane. This is UPF0481 protein At3g47200 from Arabidopsis thaliana (Mouse-ear cress).